Here is a 267-residue protein sequence, read N- to C-terminus: Glutamate racemase (267 aa).

Substrate is bound by residues 10–11 (DS) and 42–43 (YG). Cys-73 (proton donor/acceptor) is an active-site residue. 74–75 (NT) serves as a coordination point for substrate. Cys-183 functions as the Proton donor/acceptor in the catalytic mechanism. Position 184–185 (184–185 (TH)) interacts with substrate.

Belongs to the aspartate/glutamate racemases family.

It carries out the reaction L-glutamate = D-glutamate. The protein operates within cell wall biogenesis; peptidoglycan biosynthesis. Functionally, provides the (R)-glutamate required for cell wall biosynthesis. The protein is Glutamate racemase of Lactobacillus acidophilus (strain ATCC 700396 / NCK56 / N2 / NCFM).